The sequence spans 109 residues: U4-lycotoxin-Ls1a (109 aa).

Positions 1–22 are cleaved as a signal peptide; that stretch reads MKVLVLFSVLFLTLFSYSSTEA. Residues 23–44 constitute a propeptide that is removed on maturation; the sequence is IDEFDSDAEDDMLSLMANEQVR. The interval 45–88 is knottin domain; the sequence is AKACTPRLHDCSHDRHSCCRGELFKDVCYCFYPEGEDKTEVCSC. Disulfide bonds link Cys48–Cys63, Cys55–Cys72, Cys62–Cys88, and Cys74–Cys86. The linear cationic cytotoxin domain stretch occupies residues 89–108; the sequence is QQPKSHKYIEKVVDKAKTVV.

It belongs to the neurotoxin 19 (CSTX) family. 05 (U4-Lctx) subfamily. In terms of tissue distribution, expressed by the venom gland.

It is found in the secreted. Functionally, enhances the high-affinity desensitization of human P2RX3 purinoceptors. This Lycosa singoriensis (Wolf spider) protein is U4-lycotoxin-Ls1a.